Here is a 415-residue protein sequence, read N- to C-terminus: 3-isopropylmalate dehydratase large subunit (415 aa).

Residues cysteine 297, cysteine 355, and cysteine 358 each coordinate [4Fe-4S] cluster.

This sequence belongs to the aconitase/IPM isomerase family. LeuC type 2 subfamily. As to quaternary structure, heterodimer of LeuC and LeuD. [4Fe-4S] cluster is required as a cofactor.

The enzyme catalyses (2R,3S)-3-isopropylmalate = (2S)-2-isopropylmalate. Its pathway is amino-acid biosynthesis; L-leucine biosynthesis; L-leucine from 3-methyl-2-oxobutanoate: step 2/4. In terms of biological role, catalyzes the isomerization between 2-isopropylmalate and 3-isopropylmalate, via the formation of 2-isopropylmaleate. This Sulfurisphaera tokodaii (strain DSM 16993 / JCM 10545 / NBRC 100140 / 7) (Sulfolobus tokodaii) protein is 3-isopropylmalate dehydratase large subunit.